Here is a 444-residue protein sequence, read N- to C-terminus: E1B 55 kDa protein (444 aa).

Positions 1–42 (MEQDSDLESGRATNQRPPRVRVRGAGVRGRGRVRRRALSEGQ) are disordered. Residues serine 438 and serine 439 each carry the phosphoserine modification.

This sequence belongs to the adenoviridae E1B 55 kDa protein family. As to quaternary structure, interacts with host PML-4 and PML-5; this interaction promotes efficient subnuclear targeting of E1B-55K to PML nuclear bodies. Interacts with E4-ORF3 protein. Interacts with E4-ORF6 protein.

It localises to the host nucleus. The protein resides in the host cytoplasm. Its function is as follows. Plays a major role to prevent cellular inhibition of viral genome replication. Assembles an SCF-like E3 ubiquitin ligase complex based on the cellular proteins ELOB, ELOC, CUL5 and RBX1, in cooperation with viral E4orf6. This viral RING-type ligase ubiquitinates cellular substrates and targets them to proteasomal degradation: TP53/p53, LIG4, MRE11-RAD50-NBS1 (MRN) complex, ITGA3, DAXX and BLM. E1B-55K probably acts as the substrate-specific adapter of the SCF-like E3 ubiquitin ligase complex. Degradation of host TP53/p53 activity is essential for preventing E1A-induced TP53 accumulation that would otherwise lead to cell apoptosis and growth arrest. E1B-55K also inactivates TP53 transcription-factor activity by binding its transactivation domain. E1B-55K also functions as a SUMO1 E3 ligase for TP53 which causes the latter to be sequestered in promyelocytic leukemia (PML) nuclear bodies thereby contributing to maximal inhibition of TP53 function. The sequence is that of E1B 55 kDa protein from Canis lupus familiaris (Dog).